Consider the following 2097-residue polypeptide: SCAR-like protein 1 (2097 aa).

7 disordered regions span residues 205–227, 544–565, 1443–1467, 1588–1616, 1730–1802, 1820–1842, and 1893–1944; these read IANS…PRTT, AHSS…SIES, SQIA…PLSS, STEE…DPQK, QERV…EKTV, ASSH…PVTS, and YEGP…EGGY. Positions 549 to 562 are enriched in low complexity; sequence KQSSQKSSGLDGSS. The segment covering 1443 to 1454 has biased composition (polar residues); the sequence is SQIASCSPTPSN. Residues 1766-1794 are compositionally biased toward polar residues; that stretch reads SISQQGLQGSVFPSDTSDNGEHSSYTSRA. The span at 1908–1922 shows a compositional bias: basic and acidic residues; sequence YPHDDHNSEKEDIHQ. Positions 2028–2046 constitute a WH2 domain; sequence ERNLLLEQIRNKTFNLKPV.

It belongs to the SCAR/WAVE family.

It localises to the cytoplasm. The protein resides in the cytoskeleton. Its function is as follows. Involved in regulation of actin and microtubule organization. Part of a WAVE complex that activates the Arp2/3 complex. In Oryza sativa subsp. japonica (Rice), this protein is SCAR-like protein 1.